Consider the following 635-residue polypeptide: Chaperone protein HtpG (635 aa).

An a; substrate-binding region spans residues 1-343; sequence MTAEATVETR…SNDLSLNVSR (343 aa). A b region spans residues 344-560; it reads EILQQDPNID…EHDMGAQMRR (217 aa). Positions 561–635 are c; sequence LLEAAGQAVP…LNKLLLELSN (75 aa).

The protein belongs to the heat shock protein 90 family. Homodimer.

It is found in the cytoplasm. Molecular chaperone. Has ATPase activity. This chain is Chaperone protein HtpG, found in Saccharophagus degradans (strain 2-40 / ATCC 43961 / DSM 17024).